Consider the following 632-residue polypeptide: Chaperone protein HtpG (632 aa).

Residues 1-345 (MTTAAHAETL…SKDLSLNVSR (345 aa)) are a; substrate-binding. A b region spans residues 346–561 (ELLQKDPQVD…EHDMGYQMRR (216 aa)). Residues 562–632 (LMEAAGQPLP…VQRLNKLLSH (71 aa)) are c.

Belongs to the heat shock protein 90 family. Homodimer.

The protein resides in the cytoplasm. Molecular chaperone. Has ATPase activity. The protein is Chaperone protein HtpG of Chromohalobacter salexigens (strain ATCC BAA-138 / DSM 3043 / CIP 106854 / NCIMB 13768 / 1H11).